We begin with the raw amino-acid sequence, 448 residues long: Exodeoxyribonuclease 7 large subunit (448 aa).

Belongs to the XseA family. In terms of assembly, heterooligomer composed of large and small subunits.

It localises to the cytoplasm. The catalysed reaction is Exonucleolytic cleavage in either 5'- to 3'- or 3'- to 5'-direction to yield nucleoside 5'-phosphates.. Its function is as follows. Bidirectionally degrades single-stranded DNA into large acid-insoluble oligonucleotides, which are then degraded further into small acid-soluble oligonucleotides. The polypeptide is Exodeoxyribonuclease 7 large subunit (Shewanella sp. (strain MR-4)).